Here is a 505-residue protein sequence, read N- to C-terminus: MITLTGHTLTIEEMKRLLLEGEGVTACPNSMQKVAECREVVEKIVEDGKVVYGITTGFGKFSDVLIQKDDVKALQHNLIQSHACGIGDPFPEEVSRGMLILRANTMLKGVSGVRPLVVNMLLEFVNRKIHPVVPQQGSLGASGDLAPLSHLALVLLGEGEVFYKGKRVHAMVALTEEGLEPIELEAKEGLALINGTQAMTAQGVLSYIEAEATSYQAELIASMTIEGLQGIIDAFDENVHKARGYKEQVEVASRIRDILHDSKLTTKQGELRVQDAYSLRCIPQVHGASWQVLNYVKEKLEIEMNAATDNPLIFDGGEKVISGGNFHGQPIAFAMDFLKVGMAELANISERRIERLVNPQLNDLPPFLSPEPGLQSGAMIMQYAAASLVSENKTLAHPASVDSIPSSANQEDHVSMGTIASRHAHQIIQNVRRVLSVEMICAMQAAEYRGIENMSTVTKSFYHQGRQQVPSITNDRIFSTDIENITHWLKTNYSIKERLDVNAAL.

A cross-link (5-imidazolinone (Ala-Gly)) is located at residues 141–143 (ASG). The residue at position 142 (S142) is a 2,3-didehydroalanine (Ser).

The protein belongs to the PAL/histidase family. In terms of processing, contains an active site 4-methylidene-imidazol-5-one (MIO), which is formed autocatalytically by cyclization and dehydration of residues Ala-Ser-Gly.

Its subcellular location is the cytoplasm. The enzyme catalyses L-histidine = trans-urocanate + NH4(+). Its pathway is amino-acid degradation; L-histidine degradation into L-glutamate; N-formimidoyl-L-glutamate from L-histidine: step 1/3. The chain is Histidine ammonia-lyase from Bacillus cereus (strain 03BB102).